The chain runs to 250 residues: Probable aquaporin TIP-type RB7-18C (250 aa).

Transmembrane regions (helical) follow at residues 20-42 (AYVA…AIAY) and 55-77 (GLVA…AANI). The NPA 1 motif lies at 83-85 (NPA). The next 3 helical transmembrane spans lie at 97 to 119 (TILT…CLLL), 140 to 162 (FQGV…ATAA), and 172 to 194 (IAPI…FSGG). Positions 197 to 199 (NPA) match the NPA 2 motif. A helical membrane pass occupies residues 215–237 (WIYWAGPLIGGGLAGFIYGDVFI).

Belongs to the MIP/aquaporin (TC 1.A.8) family. TIP (TC 1.A.8.10) subfamily. In terms of tissue distribution, roots.

Its subcellular location is the vacuole membrane. Functionally, channel protein in tonoplast. These proteins may allow the diffusion of amino acids and/or peptides from the vacuolar compartment to the cytoplasm. The polypeptide is Probable aquaporin TIP-type RB7-18C (Nicotiana tabacum (Common tobacco)).